The following is a 538-amino-acid chain: Cytochrome P450 monooxygenase cfoH (538 aa).

A helical membrane pass occupies residues 24–44; sequence VLTFFAILLVAILLWYMIPYF. Heme is bound at residue C471.

This sequence belongs to the cytochrome P450 family. It depends on heme as a cofactor.

It is found in the membrane. Its pathway is secondary metabolite biosynthesis; flavonoid biosynthesis. Cytochrome P450 monooxygenase; part of the gene cluster that mediates the biosynthesis of chlorflavonin, a fungal flavonoid with acetolactate synthase inhibitory activity. Within the pathway, cfoH is responsible for the hydroxylation of the flavonoid skeleton at position C2'. The pathway begins with the PKS-NRPS hybrid synthetase cfoA that uses benzoic acid or p-hydroxybenzoic acid as a starter unit with four rounds of chain elongation using malonyl-CoA to form the chalcone skeleton. Then, a new type of chalcone isomerase, cfoK, catalyzes the conversion of the chalcone into a flavanone by a histidine-mediated oxa-Michael addition mechanism. The desaturation of flavanone to flavone is catalyzed by a new type of flavone synthase, the flavin mononucleotide (FMN)-dependent oxidoreductase cfoJ. Monooxygenases cfoF, cfoG, and P450 cfoH are responsible for the hydroxylation of the flavonoid skeleton at sites C3, C8, and C2', respectively. Like cfoF, the dehydratase cfoI plays also a role in the hydroxylation of position C3. Methyltransferases cfoB, cfoC, and cfoD then catalyze the methylation of C7-OH, C8-OH, and C3-OH, respectively. Finally, the monooxygenase cfoE is responsible for the chlorination of flavonoid at position C3'. This chain is Cytochrome P450 monooxygenase cfoH, found in Aspergillus candidus.